Consider the following 324-residue polypeptide: MSYSNLKLFSLSSNHELAQKVAKEIGIELGKVSVGAHSDGETVVHIDESVRGDHVFILQSTSDPVNDNLMELLIMMDALRRASAASINIVLPYYGYARQDRKARAREPITSKLVANMLQIAGADRLITFDLHAPQIQGFFNIPVDHLMGSPLIAEYFRRQLVSAGDDIVVVSPDHGGVGRARKLANFLKAPLSIIDKRRPRANVAEIMNIIGDVQGKKCILIDDMIDTAGTITLAANALKELGATEVYASCTHAVLSGPAIERINNSAITKLVVLDTIEMPEERQSEKIVQLSIAHLLADAIIRIHERRPLSPLFELHLPSEQI.

ATP contacts are provided by residues 39-41 (DGE) and 98-99 (RQ). Histidine 132 and aspartate 174 together coordinate Mg(2+). The active site involves lysine 197. Residues arginine 199, aspartate 223, and 227–231 (DTAGT) each bind D-ribose 5-phosphate.

Belongs to the ribose-phosphate pyrophosphokinase family. Class I subfamily. As to quaternary structure, homohexamer. Mg(2+) serves as cofactor.

The protein localises to the cytoplasm. The catalysed reaction is D-ribose 5-phosphate + ATP = 5-phospho-alpha-D-ribose 1-diphosphate + AMP + H(+). It participates in metabolic intermediate biosynthesis; 5-phospho-alpha-D-ribose 1-diphosphate biosynthesis; 5-phospho-alpha-D-ribose 1-diphosphate from D-ribose 5-phosphate (route I): step 1/1. In terms of biological role, involved in the biosynthesis of the central metabolite phospho-alpha-D-ribosyl-1-pyrophosphate (PRPP) via the transfer of pyrophosphoryl group from ATP to 1-hydroxyl of ribose-5-phosphate (Rib-5-P). The protein is Ribose-phosphate pyrophosphokinase 1 of Lactococcus lactis subsp. lactis (strain IL1403) (Streptococcus lactis).